The primary structure comprises 104 residues: Large ribosomal subunit protein uL23 (104 aa).

This sequence belongs to the universal ribosomal protein uL23 family. As to quaternary structure, part of the 50S ribosomal subunit. Contacts protein L29, and trigger factor when it is bound to the ribosome.

In terms of biological role, one of the early assembly proteins it binds 23S rRNA. One of the proteins that surrounds the polypeptide exit tunnel on the outside of the ribosome. Forms the main docking site for trigger factor binding to the ribosome. The polypeptide is Large ribosomal subunit protein uL23 (Paraburkholderia phymatum (strain DSM 17167 / CIP 108236 / LMG 21445 / STM815) (Burkholderia phymatum)).